The primary structure comprises 250 residues: Ubiquinone/menaquinone biosynthesis C-methyltransferase UbiE (250 aa).

S-adenosyl-L-methionine is bound by residues Ser73, Asp94, and 122–123 (NA).

Belongs to the class I-like SAM-binding methyltransferase superfamily. MenG/UbiE family.

It catalyses the reaction a 2-demethylmenaquinol + S-adenosyl-L-methionine = a menaquinol + S-adenosyl-L-homocysteine + H(+). The enzyme catalyses a 2-methoxy-6-(all-trans-polyprenyl)benzene-1,4-diol + S-adenosyl-L-methionine = a 5-methoxy-2-methyl-3-(all-trans-polyprenyl)benzene-1,4-diol + S-adenosyl-L-homocysteine + H(+). It participates in quinol/quinone metabolism; menaquinone biosynthesis; menaquinol from 1,4-dihydroxy-2-naphthoate: step 2/2. It functions in the pathway cofactor biosynthesis; ubiquinone biosynthesis. In terms of biological role, methyltransferase required for the conversion of demethylmenaquinol (DMKH2) to menaquinol (MKH2) and the conversion of 2-polyprenyl-6-methoxy-1,4-benzoquinol (DDMQH2) to 2-polyprenyl-3-methyl-6-methoxy-1,4-benzoquinol (DMQH2). The polypeptide is Ubiquinone/menaquinone biosynthesis C-methyltransferase UbiE (Legionella pneumophila (strain Corby)).